The chain runs to 127 residues: Glycine cleavage system H protein (127 aa).

Residues 22–104 (KVRIGITDFA…YEKAWMIVVE (83 aa)) form the Lipoyl-binding domain. An N6-lipoyllysine modification is found at Lys63.

This sequence belongs to the GcvH family. As to quaternary structure, the glycine cleavage system is composed of four proteins: P, T, L and H. Requires (R)-lipoate as cofactor.

Functionally, the glycine cleavage system catalyzes the degradation of glycine. The H protein shuttles the methylamine group of glycine from the P protein to the T protein. In terms of biological role, is also involved in protein lipoylation via its role as an octanoyl/lipoyl carrier protein intermediate. This is Glycine cleavage system H protein from Geobacillus sp. (strain WCH70).